A 401-amino-acid chain; its full sequence is CLIP domain-containing serine protease B9 (401 aa).

A signal peptide spans 1–26 (MTSYNRSVAWLTVCVLLALHIGGSHQ). One can recognise a Clip domain in the interval 30-85 (QCTTPTRLRGRCISIYECDSILDYFKQRILTWEEREFLRKSQCTGATSGRQPFVCC). Cystine bridges form between Cys31/Cys84, Cys41/Cys72, and Cys47/Cys85. An N-linked (GlcNAc...) asparagine glycan is attached at Asn88. The 253-residue stretch at 148–400 (IYGGQNADID…YMAWVRSNIK (253 aa)) folds into the Peptidase S1 domain. An intrachain disulfide couples Cys178 to Cys194. Catalysis depends on charge relay system residues His193 and Asp257. Cystine bridges form between Cys322–Cys339 and Cys349–Cys376. A glycan (N-linked (GlcNAc...) asparagine) is linked at Asn330. Residue Ser353 is the Charge relay system of the active site.

This sequence belongs to the peptidase S1 family. CLIP subfamily. Forms a covalent heterodimer with SRPN2; the interaction inhibits CLIPB9 protease activity. Post-translationally, proteolytic cleavage is necessary for activation.

Its subcellular location is the secreted. Its activity is regulated as follows. Inhibited by serpin SRPN2. Functionally, serine protease that functions in the melanization-mediated immune response. Cleaves and activates prophenoloxidase (PPO), which is required for the activation of the prophenoloxidase cascade probably following the recognition of pathogen-derived products. The protein is CLIP domain-containing serine protease B9 of Anopheles gambiae (African malaria mosquito).